The primary structure comprises 341 residues: Serpentine receptor class alpha-28 (341 aa).

Transmembrane regions (helical) follow at residues 25–45, 57–77, 107–129, 142–162, 188–208, 242–262, and 275–295; these read FIIS…RVLL, LLFS…VIRL, YYYT…LFSF, ASIV…YWVF, VNNI…FLYI, IVIF…SVFI, and LIIS…LIIL.

Belongs to the nematode receptor-like protein sra family.

The protein resides in the membrane. The sequence is that of Serpentine receptor class alpha-28 (sra-28) from Caenorhabditis elegans.